The sequence spans 366 residues: Prostaglandin F2-alpha receptor (366 aa).

Topologically, residues 1–31 (MSMNSSKQPVSPAAGLIANTTCQTENRLSVF) are extracellular. Asn-4 and Asn-19 each carry an N-linked (GlcNAc...) asparagine glycan. The chain crosses the membrane as a helical span at residues 32 to 55 (FSIIFMTVGILSNSLAIAILMKAY). Topologically, residues 56 to 69 (QRFRQKSKASFLLL) are cytoplasmic. The chain crosses the membrane as a helical span at residues 70-90 (ASGLVITDFFGHLINGGIAVF). The Extracellular portion of the chain corresponds to 91-109 (VYASDKDWIRFDQSNILCS). A disulfide bond links Cys-108 and Cys-186. The helical transmembrane segment at 110-131 (IFGISMVFSGLCPLFLGSAMAI) threads the bilayer. The Cytoplasmic portion of the chain corresponds to 132–152 (ERCIGVTNPIFHSTKITSKHV). Residues 153-175 (KMILSGVCMFAVFVAVLPILGHR) traverse the membrane as a helical segment. Topologically, residues 176–198 (DYQIQASRTWCFYNTEHIEDWED) are extracellular. Residues 199–224 (RFYLLFFSFLGLLALGVSFSCNAVTG) traverse the membrane as a helical segment. The Cytoplasmic segment spans residues 225 to 250 (VTLLRVKFRSQQHRQGRSHHLEMIIQ). A helical transmembrane segment spans residues 251–267 (LLAIMCVSCVCWSPFLV). Residues 268–285 (TMANIAINGNNSPVTCET) lie on the Extracellular side of the membrane. Residues 286 to 307 (TLFALRMATWNQILDPWVYILL) form a helical membrane-spanning segment. At 308–366 (RKAVLRNLYKLASRCCGVNIISLHIWELSSIKNSLKVAAISESPAAEKESQQASSEAGL) the chain is on the cytoplasmic side.

It belongs to the G-protein coupled receptor 1 family.

Its subcellular location is the cell membrane. In terms of biological role, receptor for prostaglandin F2-alpha (PGF2-alpha). The activity of this receptor is mediated by G proteins which activate a phosphatidylinositol-calcium second messenger system. Initiates luteolysis in the corpus luteum. This Mus musculus (Mouse) protein is Prostaglandin F2-alpha receptor (Ptgfr).